A 499-amino-acid polypeptide reads, in one-letter code: Aspartyl/glutamyl-tRNA(Asn/Gln) amidotransferase subunit B (499 aa).

This sequence belongs to the GatB/GatE family. GatB subfamily. As to quaternary structure, heterotrimer of A, B and C subunits.

The enzyme catalyses L-glutamyl-tRNA(Gln) + L-glutamine + ATP + H2O = L-glutaminyl-tRNA(Gln) + L-glutamate + ADP + phosphate + H(+). The catalysed reaction is L-aspartyl-tRNA(Asn) + L-glutamine + ATP + H2O = L-asparaginyl-tRNA(Asn) + L-glutamate + ADP + phosphate + 2 H(+). Functionally, allows the formation of correctly charged Asn-tRNA(Asn) or Gln-tRNA(Gln) through the transamidation of misacylated Asp-tRNA(Asn) or Glu-tRNA(Gln) in organisms which lack either or both of asparaginyl-tRNA or glutaminyl-tRNA synthetases. The reaction takes place in the presence of glutamine and ATP through an activated phospho-Asp-tRNA(Asn) or phospho-Glu-tRNA(Gln). This is Aspartyl/glutamyl-tRNA(Asn/Gln) amidotransferase subunit B from Bartonella bacilliformis (strain ATCC 35685 / KC583 / Herrer 020/F12,63).